A 448-amino-acid polypeptide reads, in one-letter code: Argininosuccinate synthase (448 aa).

ATP is bound by residues 17-25 (AFSGGLDTS) and Ala43. Residue Tyr99 participates in L-citrulline binding. Gly129 and Thr131 together coordinate ATP. Residues Thr131, Asn135, and Asp136 each coordinate L-aspartate. Residue Asn135 coordinates L-citrulline. An ATP-binding site is contributed by Asp136. 2 residues coordinate L-citrulline: Arg139 and Ser192. Residue Asp194 participates in ATP binding. L-citrulline-binding residues include Thr201, Glu203, and Glu280.

This sequence belongs to the argininosuccinate synthase family. Type 2 subfamily. In terms of assembly, homotetramer.

The protein resides in the cytoplasm. The enzyme catalyses L-citrulline + L-aspartate + ATP = 2-(N(omega)-L-arginino)succinate + AMP + diphosphate + H(+). It functions in the pathway amino-acid biosynthesis; L-arginine biosynthesis; L-arginine from L-ornithine and carbamoyl phosphate: step 2/3. This chain is Argininosuccinate synthase, found in Enterobacter sp. (strain 638).